The primary structure comprises 274 residues: MAIVKCKPTSPGRRFVVKVVNKELHKGAPHAPLLEKKSKSGGRNNNGRITTRHVGGGHKQHYRLVDFRRNDKDGIPATVERIEYDPNRTAHIALLCYADGERRYIIAPKGVSAGDQLIAGALAPIKAGNSLQLRNIPVGSTIHGVELKPGKGAQIARSAGASAQLIARDGVYVTLRLRSGEMRKVLAECRATLGEVSNSEHSLRSLGKAGAKRWRGVRPTVRGVAMNPVDHPHGGGEGRTSGGRHPVSPWGFPTKGAKTRGNKRTDNMIVRRRK.

2 disordered regions span residues 28–55 (APHA…RHVG) and 224–274 (VAMN…RRRK).

The protein belongs to the universal ribosomal protein uL2 family. As to quaternary structure, part of the 50S ribosomal subunit. Forms a bridge to the 30S subunit in the 70S ribosome.

Functionally, one of the primary rRNA binding proteins. Required for association of the 30S and 50S subunits to form the 70S ribosome, for tRNA binding and peptide bond formation. It has been suggested to have peptidyltransferase activity; this is somewhat controversial. Makes several contacts with the 16S rRNA in the 70S ribosome. This Pseudomonas putida (strain GB-1) protein is Large ribosomal subunit protein uL2.